A 1104-amino-acid polypeptide reads, in one-letter code: A disintegrin and metalloproteinase with thrombospondin motifs 10 (1104 aa).

Positions 1–25 (MASACQILRWALALGLGLTFKVTHA) are cleaved as a signal peptide. Residues 26-233 (FRSQDELLSS…SERGQLGLKR (208 aa)) constitute a propeptide that is removed on maturation. 2 N-linked (GlcNAc...) asparagine glycosylation sites follow: Asn-90 and Asn-222. The Peptidase M12B domain maps to 239-457 (RYVETLVVAD…GLGLCLNNRP (219 aa)). 11 cysteine pairs are disulfide-bonded: Cys-315–Cys-376, Cys-351–Cys-358, Cys-370–Cys-452, Cys-409–Cys-436, Cys-479–Cys-501, Cys-490–Cys-508, Cys-496–Cys-531, Cys-521–Cys-536, Cys-559–Cys-596, Cys-563–Cys-601, and Cys-574–Cys-586. A Zn(2+)-binding site is contributed by His-392. The active site involves Glu-393. Residues His-396 and His-402 each coordinate Zn(2+). One can recognise a Disintegrin domain in the interval 460-546 (QDFVYPTVAP…VPFGSRPEGV (87 aa)). The region spanning 547–602 (DGAWGPWTPWGDCSRSCGGGVSSSSRHCDSPRPTIGGKYCLGERRRHRSCNTNDCP) is the TSP type-1 1 domain. The tract at residues 706–818 (ETIEGVFSPA…PALHYRFNAP (113 aa)) is spacer. Asn-740 and Asn-795 each carry an N-linked (GlcNAc...) asparagine glycan. TSP type-1 domains are found at residues 825 to 885 (PPYS…EPCP), 888 to 943 (WVVG…QGPM), 944 to 1003 (CPPE…RRCP), and 1004 to 1058 (PARW…AKCD). 3 cysteine pairs are disulfide-bonded: Cys-837-Cys-879, Cys-841-Cys-884, and Cys-852-Cys-866. N-linked (GlcNAc...) asparagine glycosylation is present at Asn-892. The PLAC domain occupies 1066-1104 (GPEECKDVNKVAYCPLVLKFQFCSRAYFRQMCCKTCQGR).

Interacts with FBN1; this interaction promotes microfibrils assembly. Zn(2+) serves as cofactor. Glycosylated. Can be O-fucosylated by POFUT2 on a serine or a threonine residue found within the consensus sequence C1-X(2)-(S/T)-C2-G of the TSP type-1 repeat domains where C1 and C2 are the first and second cysteine residue of the repeat, respectively. Fucosylated repeats can then be further glycosylated by the addition of a beta-1,3-glucose residue by the glucosyltransferase, B3GALTL. Fucosylation mediates the efficient secretion of ADAMTS family members. Can also be C-glycosylated with one or two mannose molecules on tryptophan residues within the consensus sequence W-X-X-W of the TPRs, and N-glycosylated. These other glycosylations can also facilitate secretion. Widely expressed in adult tissues.

The protein resides in the secreted. Its subcellular location is the extracellular space. It localises to the extracellular matrix. In terms of biological role, metalloprotease that participate in microfibrils assembly. Microfibrils are extracellular matrix components occurring independently or along with elastin in the formation of elastic tissues. The polypeptide is A disintegrin and metalloproteinase with thrombospondin motifs 10 (Adamts10) (Mus musculus (Mouse)).